The sequence spans 28 residues: 3,4-dihydroxybenzoate decarboxylase (28 aa).

As to quaternary structure, homopentamer.

The catalysed reaction is 3,4-dihydroxybenzoate + H(+) = catechol + CO2. Its activity is regulated as follows. Inhibited by oxygen. Completely inhibited by HgCl(2). Partially inhibited by ZnSO(4), 2,3,4-trihydroxybeonzoate and 3,4,5-trihydroxybeonzoate. Unaffected by KCl, MnCl(2) or EDTA. Not stimulated by thiamine phosphate, pyridoxal 5'-phosphate or biotin. Not inhibited by hydroxylamine, NaBH(4) or avidin. Its function is as follows. Reversibly catalyzes the decarboxylation of 3,4-dihydroxybenzoate to catechol. Inactive toward 4-hydroxybenzoate and other benzoate derivatives. The sequence is that of 3,4-dihydroxybenzoate decarboxylase from Sedimentibacter hydroxybenzoicus (Clostridium hydroxybenzoicum).